We begin with the raw amino-acid sequence, 122 residues long: Large ribosomal subunit protein uL22 (122 aa).

This sequence belongs to the universal ribosomal protein uL22 family. In terms of assembly, part of the 50S ribosomal subunit.

Its function is as follows. This protein binds specifically to 23S rRNA; its binding is stimulated by other ribosomal proteins, e.g. L4, L17, and L20. It is important during the early stages of 50S assembly. It makes multiple contacts with different domains of the 23S rRNA in the assembled 50S subunit and ribosome. The globular domain of the protein is located near the polypeptide exit tunnel on the outside of the subunit, while an extended beta-hairpin is found that lines the wall of the exit tunnel in the center of the 70S ribosome. This Prochlorococcus marinus (strain MIT 9303) protein is Large ribosomal subunit protein uL22.